The primary structure comprises 238 residues: Large ribosomal subunit protein uL1 (238 aa).

This sequence belongs to the universal ribosomal protein uL1 family. Part of the 50S ribosomal subunit.

Binds directly to 23S rRNA. The L1 stalk is quite mobile in the ribosome, and is involved in E site tRNA release. In terms of biological role, protein L1 is also a translational repressor protein, it controls the translation of the L11 operon by binding to its mRNA. In Trichormus variabilis (strain ATCC 29413 / PCC 7937) (Anabaena variabilis), this protein is Large ribosomal subunit protein uL1.